Reading from the N-terminus, the 79-residue chain is Pyridoxal 5'-phosphate synthase PDX1-like 4 (79 aa).

This sequence belongs to the PdxS/SNZ family.

The sequence is that of Pyridoxal 5'-phosphate synthase PDX1-like 4 (PDX1L4) from Arabidopsis thaliana (Mouse-ear cress).